An 872-amino-acid polypeptide reads, in one-letter code: Tetratricopeptide repeat protein 16 (872 aa).

The interval 1 to 20 is disordered; the sequence is MTDSDEDALKVDQGPSQDIP. TPR repeat units lie at residues 61–94, 96–128, 136–169, 251–284, 285–318, 331–364, 365–398, and 406–439; these read VREY…DPQL, DFYA…QQDN, TFVL…QPEK, AQQA…NPLD, PSFF…VTED, LLTY…EQQE, KGLY…SPQD, and GLLQ…NPQK. Disordered stretches follow at residues 557-640 and 653-872; these read ATPE…ETET and TAMT…YEVL. Positions 577–590 are enriched in acidic residues; the sequence is KEEEEKEEEEQKEE. Positions 591–604 are enriched in basic and acidic residues; it reads EEQKKEEKKEEKKP. Polar residues-rich tracts occupy residues 610-640, 653-675, 689-709, and 721-754; these read KVAS…ETET, TAMT…NNRE, GQRQ…NFSK, and KTKA…SQGP. A compositionally biased stretch (basic residues) spans 762–783; it reads KTTRSPRQRPRKVKAARGRSWR. Polar residues-rich tracts occupy residues 799 to 827 and 839 to 861; these read RSST…GQRT and GMSS…SKTE.

The sequence is that of Tetratricopeptide repeat protein 16 (TTC16) from Macaca fascicularis (Crab-eating macaque).